We begin with the raw amino-acid sequence, 251 residues long: Seminal metalloprotease 1 (251 aa).

An N-terminal signal peptide occupies residues 1 to 18 (MFPQIWGVIFLFTPTVFS). The region spanning 44 to 248 (NGIVNQIYHW…RKLNKMYRCP (205 aa)) is the Peptidase M12A domain. N-linked (GlcNAc...) asparagine glycosylation is found at Asn55 and Asn120. Cystine bridges form between Cys87/Cys247 and Cys111/Cys136. His144 lines the Zn(2+) pocket. Glu145 is a catalytic residue. Zn(2+) contacts are provided by His148 and His154. Asn185 carries an N-linked (GlcNAc...) asparagine glycan.

Zn(2+) serves as cofactor. Undergoes cleavage in the male during mating with a cleaved product detected in the ejaculatory duct and/or bulb of males by 8-10 minutes after the start of mating. Further cleavage occurs in the mated female. May undergo cleavage in a two-step process where it is first cleaved by Sems, making it susceptible to activational cleavage which may be carried out by another protease or by autocleavage. Produced in the male accessory glands and secreted into seminal fluid. In mated females, confined to the reproductive tract and also detected in eggs laid by mated females (at protein level).

The protein localises to the secreted. In terms of biological role, seminal fluid metalloprotease which is transferred to females during mating and is required for processing of two other seminal fluid proteins Acp26Aa and Acp36DE in mated females. This chain is Seminal metalloprotease 1, found in Drosophila melanogaster (Fruit fly).